We begin with the raw amino-acid sequence, 383 residues long: Chaperone protein DnaJ (383 aa).

Residues 5–70 form the J domain; it reads DYYELLGVSR…QKRAAYDRFG (66 aa). A CR-type zinc finger spans residues 140–219; sequence GTKTEIRVPT…CSGAGTVPRE (80 aa). Residues cysteine 153, cysteine 156, cysteine 171, cysteine 174, cysteine 193, cysteine 196, cysteine 207, and cysteine 210 each contribute to the Zn(2+) site. 4 CXXCXGXG motif repeats span residues 153–160, 171–178, 193–200, and 207–214; these read CDACSGTG, CPTCGGAG, and CRVCSGAG.

Belongs to the DnaJ family. Homodimer. The cofactor is Zn(2+).

The protein resides in the cytoplasm. Functionally, participates actively in the response to hyperosmotic and heat shock by preventing the aggregation of stress-denatured proteins and by disaggregating proteins, also in an autonomous, DnaK-independent fashion. Unfolded proteins bind initially to DnaJ; upon interaction with the DnaJ-bound protein, DnaK hydrolyzes its bound ATP, resulting in the formation of a stable complex. GrpE releases ADP from DnaK; ATP binding to DnaK triggers the release of the substrate protein, thus completing the reaction cycle. Several rounds of ATP-dependent interactions between DnaJ, DnaK and GrpE are required for fully efficient folding. Also involved, together with DnaK and GrpE, in the DNA replication of plasmids through activation of initiation proteins. The sequence is that of Chaperone protein DnaJ from Acidiphilium cryptum (strain JF-5).